Consider the following 32-residue polypeptide: Cytochrome b6-f complex subunit 8 (32 aa).

Residues 6 to 26 (IVSLAWAALMVVFTFSLSLVV) traverse the membrane as a helical segment.

The protein belongs to the PetN family. In terms of assembly, the 4 large subunits of the cytochrome b6-f complex are cytochrome b6, subunit IV (17 kDa polypeptide, PetD), cytochrome f and the Rieske protein, while the 4 small subunits are PetG, PetL, PetM and PetN. The complex functions as a dimer.

It is found in the plastid. Its subcellular location is the chloroplast thylakoid membrane. Functionally, component of the cytochrome b6-f complex, which mediates electron transfer between photosystem II (PSII) and photosystem I (PSI), cyclic electron flow around PSI, and state transitions. The polypeptide is Cytochrome b6-f complex subunit 8 (Illicium oligandrum (Star anise)).